The primary structure comprises 522 residues: 3'3'-cGAMP-specific phosphodiesterase 2 (522 aa).

The Response regulatory domain occupies 36 to 160 (CVLLVDDDEQ…QKLRTLLYSM (125 aa)). A 4-aspartylphosphate modification is found at D91. Residues 325-522 (LRETSKELVY…FIAIRASLPD (198 aa)) enclose the HD-GYP domain. A divalent metal cation contacts are provided by H382 and D383. K386 functions as the Proton donor in the catalytic mechanism. Residues H411, H437, H438, and D466 each coordinate a divalent metal cation.

As to quaternary structure, homodimer. Mn(2+) serves as cofactor.

The enzyme catalyses 3',3'-cGAMP + H2O = 5'-pApG-3' + H(+). Phosphodiesterase (PDE) that catalyzes the hydrolysis of 3'3'-cyclic GMP-AMP (3'3'-cGAMP), leading to linear 5'-pApG. Counteracts the function of the 3'3'-cGAMP synthase DncV, and is involved in the modulation of intracellular 3'3'-cGAMP levels. Enhances bacterial chemotaxis and inhibits intestinal colonization in vivo. Thus exerts a crucial role in regulating bacterial infectivity through catalyzing 3'3'-cGAMP degradation. Is specific for 3'3'-cGAMP since it cannot degrade other cGAMP linkage isomers (3'2'-, 2'3'-, and 2'2'-cGAMPs). Is also able to hydrolyze c-di-GMP but not c-di-AMP. This chain is 3'3'-cGAMP-specific phosphodiesterase 2, found in Vibrio cholerae serotype O1 (strain ATCC 39315 / El Tor Inaba N16961).